The sequence spans 353 residues: Photosystem II D2 protein (353 aa).

T2 carries the post-translational modification N-acetylthreonine. T2 is subject to Phosphothreonine. Residues 41–61 traverse the membrane as a helical segment; that stretch reads CAYFAVGGWFTGTTFVTSWYT. H118 is a chlorophyll a binding site. Residues 125 to 141 traverse the membrane as a helical segment; that stretch reads GFMLRQFELARSVQLRP. 2 residues coordinate pheophytin a: Q130 and N143. A helical transmembrane segment spans residues 153-166; the sequence is VFVSVFLIYPLGQS. H198 serves as a coordination point for chlorophyll a. A helical transmembrane segment spans residues 208–228; the sequence is AALLCAIHGATVENTLFEDGD. A plastoquinone contacts are provided by H215 and F262. H215 provides a ligand contact to Fe cation. Position 269 (H269) interacts with Fe cation. A helical membrane pass occupies residues 279-295; it reads GLWMSALGVVGLALNLR.

This sequence belongs to the reaction center PufL/M/PsbA/D family. In terms of assembly, PSII is composed of 1 copy each of membrane proteins PsbA, PsbB, PsbC, PsbD, PsbE, PsbF, PsbH, PsbI, PsbJ, PsbK, PsbL, PsbM, PsbT, PsbX, PsbY, PsbZ, Psb30/Ycf12, at least 3 peripheral proteins of the oxygen-evolving complex and a large number of cofactors. It forms dimeric complexes. The cofactor is The D1/D2 heterodimer binds P680, chlorophylls that are the primary electron donor of PSII, and subsequent electron acceptors. It shares a non-heme iron and each subunit binds pheophytin, quinone, additional chlorophylls, carotenoids and lipids. There is also a Cl(-1) ion associated with D1 and D2, which is required for oxygen evolution. The PSII complex binds additional chlorophylls, carotenoids and specific lipids..

It is found in the plastid. The protein localises to the chloroplast thylakoid membrane. It carries out the reaction 2 a plastoquinone + 4 hnu + 2 H2O = 2 a plastoquinol + O2. Photosystem II (PSII) is a light-driven water:plastoquinone oxidoreductase that uses light energy to abstract electrons from H(2)O, generating O(2) and a proton gradient subsequently used for ATP formation. It consists of a core antenna complex that captures photons, and an electron transfer chain that converts photonic excitation into a charge separation. The D1/D2 (PsbA/PsbD) reaction center heterodimer binds P680, the primary electron donor of PSII as well as several subsequent electron acceptors. D2 is needed for assembly of a stable PSII complex. The protein is Photosystem II D2 protein of Jasminum nudiflorum (Winter jasmine).